The chain runs to 328 residues: UPF0285 protein MJ1370 (328 aa).

This sequence belongs to the UPF0285 family.

This chain is UPF0285 protein MJ1370, found in Methanocaldococcus jannaschii (strain ATCC 43067 / DSM 2661 / JAL-1 / JCM 10045 / NBRC 100440) (Methanococcus jannaschii).